A 627-amino-acid polypeptide reads, in one-letter code: (-)-beta-pinene synthase 1, chloroplastic (627 aa).

A chloroplast-targeting transit peptide spans 1-50 (MDLISVLPSTSKSCVCLHKPLSSSTHKLKPFCRTIRILGMPRPRKSVLMA). Mg(2+) contacts are provided by Asp378, Asp382, and Asp530. The DDXXD motif motif lies at 378-382 (DDMYD).

This sequence belongs to the terpene synthase family. Tpsd subfamily. Requires Mg(2+) as cofactor. Mn(2+) is required as a cofactor.

The protein localises to the plastid. The protein resides in the chloroplast. The enzyme catalyses (2E)-geranyl diphosphate = (1S,5S)-beta-pinene + diphosphate. It carries out the reaction (2E)-geranyl diphosphate = (1S,5S)-alpha-pinene + diphosphate. Its pathway is terpene metabolism; oleoresin biosynthesis. It participates in secondary metabolite biosynthesis; terpenoid biosynthesis. Functionally, monoterpene synthase (TPS) involved in the biosynthesis of monoterpene natural products included in conifer oleoresin secretions and volatile emissions; these compounds contribute to biotic and abiotic stress defense against herbivores and pathogens. Catalyzes the conversion of (2E)-geranyl diphosphate (GPP) to (-)-beta-pinene and, to a lower extent, to (-)-alpha-pinene. The sequence is that of (-)-beta-pinene synthase 1, chloroplastic from Pinus contorta (Shore pine).